The chain runs to 234 residues: 7-cyano-7-deazaguanine synthase (234 aa).

ATP is bound at residue 13-23; the sequence is LSGGQDSTTCL. 4 residues coordinate Zn(2+): Cys193, Cys201, Cys204, and Cys207.

The protein belongs to the QueC family. It depends on Zn(2+) as a cofactor.

It catalyses the reaction 7-carboxy-7-deazaguanine + NH4(+) + ATP = 7-cyano-7-deazaguanine + ADP + phosphate + H2O + H(+). It functions in the pathway purine metabolism; 7-cyano-7-deazaguanine biosynthesis. Functionally, catalyzes the ATP-dependent conversion of 7-carboxy-7-deazaguanine (CDG) to 7-cyano-7-deazaguanine (preQ(0)). This is 7-cyano-7-deazaguanine synthase from Chromobacterium violaceum (strain ATCC 12472 / DSM 30191 / JCM 1249 / CCUG 213 / NBRC 12614 / NCIMB 9131 / NCTC 9757 / MK).